Reading from the N-terminus, the 29-residue chain is Trypsin inhibitor 3 (29 aa).

Disulfide bonds link Cys3–Cys20, Cys10–Cys22, and Cys16–Cys28.

Belongs to the protease inhibitor I7 (squash-type serine protease inhibitor) family.

The protein resides in the secreted. Functionally, strongly inhibits trypsin, weakly inhibits chymotrypsin. The polypeptide is Trypsin inhibitor 3 (Cyclanthera pedata (Achocha)).